Here is a 735-residue protein sequence, read N- to C-terminus: Ribosomal protein S6 kinase alpha-1 (735 aa).

At Ser54 the chain carries Phosphoserine. A Protein kinase 1 domain is found at 62–321 (FELLKVLGQG…AEEIKRHIFY (260 aa)). Residues 68–76 (LGQGSFGKV) and Lys94 contribute to the ATP site. Asp187 (proton acceptor) is an active-site residue. The residue at position 221 (Ser221) is a Phosphoserine; by PDPK1. Ser307 carries the phosphoserine modification. Positions 322–391 (STIDWNKLYR…VATGLMEDDS (70 aa)) constitute an AGC-kinase C-terminal domain. Thr359 bears the Phosphothreonine mark. Ser363 carries the post-translational modification Phosphoserine. Phosphoserine; by autocatalysis is present on residues Ser369 and Ser380. The region spanning 418–675 (YIVKETIGVG…AKQVLQHPWI (258 aa)) is the Protein kinase 2 domain. Residues 424 to 432 (IGVGSYSVC) and Lys447 contribute to the ATP site. Catalysis depends on Asp535, which acts as the Proton acceptor. Thr573 is modified (phosphothreonine). Ser732 is modified (phosphoserine).

Belongs to the protein kinase superfamily. AGC Ser/Thr protein kinase family. S6 kinase subfamily. In terms of assembly, forms a complex with either MAPK1/ERK2 or MAPK3/ERK1 in quiescent cells. Transiently dissociates following mitogenic stimulation. Interacts with ETV1/ER81 and FGFR1. It depends on Mg(2+) as a cofactor. In terms of processing, activated by phosphorylation at Ser-221 by PDPK1. Autophosphorylated on Ser-380, as part of the activation process. May be phosphorylated at Thr-359 and Ser-363 by MAPK1/ERK2 and MAPK3/ERK1. N-terminal myristoylation results in an activated kinase in the absence of added growth factors.

The protein localises to the nucleus. Its subcellular location is the cytoplasm. It catalyses the reaction L-seryl-[protein] + ATP = O-phospho-L-seryl-[protein] + ADP + H(+). The enzyme catalyses L-threonyl-[protein] + ATP = O-phospho-L-threonyl-[protein] + ADP + H(+). With respect to regulation, upon extracellular signal or mitogen stimulation, phosphorylated at Thr-573 in the C-terminal kinase domain (CTKD) by MAPK1/ERK2 and MAPK3/ERK1. The activated CTKD then autophosphorylates Ser-380, allowing binding of PDPK1, which in turn phosphorylates Ser-221 in the N-terminal kinase domain (NTDK) leading to the full activation of the protein and subsequent phosphorylation of the substrates by the NTKD. Serine/threonine-protein kinase that acts downstream of ERK (MAPK1/ERK2 and MAPK3/ERK1) signaling and mediates mitogenic and stress-induced activation of the transcription factors CREB1, ETV1/ER81 and NR4A1/NUR77, regulates translation through RPS6 and EIF4B phosphorylation, and mediates cellular proliferation, survival, and differentiation by modulating mTOR signaling and repressing pro-apoptotic function of BAD and DAPK1. In fibroblast, is required for EGF-stimulated phosphorylation of CREB1, which results in the subsequent transcriptional activation of several immediate-early genes. In response to mitogenic stimulation (EGF and PMA), phosphorylates and activates NR4A1/NUR77 and ETV1/ER81 transcription factors and the cofactor CREBBP. Upon insulin-derived signal, acts indirectly on the transcription regulation of several genes by phosphorylating GSK3B at 'Ser-9' and inhibiting its activity. Phosphorylates RPS6 in response to serum or EGF via an mTOR-independent mechanism and promotes translation initiation by facilitating assembly of the pre-initiation complex. In response to insulin, phosphorylates EIF4B, enhancing EIF4B affinity for the EIF3 complex and stimulating cap-dependent translation. Is involved in the mTOR nutrient-sensing pathway by directly phosphorylating TSC2 at 'Ser-1798', which potently inhibits TSC2 ability to suppress mTOR signaling, and mediates phosphorylation of RPTOR, which regulates mTORC1 activity and may promote rapamycin-sensitive signaling independently of the PI3K/AKT pathway. Also involved in feedback regulation of mTORC1 and mTORC2 by phosphorylating DEPTOR. Mediates cell survival by phosphorylating the pro-apoptotic proteins BAD and DAPK1 and suppressing their pro-apoptotic function. Promotes the survival of hepatic stellate cells by phosphorylating CEBPB in response to the hepatotoxin carbon tetrachloride (CCl4). Mediates induction of hepatocyte prolifration by TGFA through phosphorylation of CEBPB. Is involved in cell cycle regulation by phosphorylating the CDK inhibitor CDKN1B, which promotes CDKN1B association with 14-3-3 proteins and prevents its translocation to the nucleus and inhibition of G1 progression. Phosphorylates EPHA2 at 'Ser-897', the RPS6KA-EPHA2 signaling pathway controls cell migration. In response to mTORC1 activation, phosphorylates EIF4B at 'Ser-406' and 'Ser-422' which stimulates bicarbonate cotransporter SLC4A7 mRNA translation, increasing SLC4A7 protein abundance and function. The sequence is that of Ribosomal protein S6 kinase alpha-1 (Rps6ka1) from Rattus norvegicus (Rat).